Reading from the N-terminus, the 411-residue chain is Phosphopentomutase (411 aa).

Mn(2+) contacts are provided by Asp-14, Asp-306, His-311, Asp-347, His-348, and His-359.

It belongs to the phosphopentomutase family. The cofactor is Mn(2+).

It is found in the cytoplasm. The enzyme catalyses 2-deoxy-alpha-D-ribose 1-phosphate = 2-deoxy-D-ribose 5-phosphate. It catalyses the reaction alpha-D-ribose 1-phosphate = D-ribose 5-phosphate. It participates in carbohydrate degradation; 2-deoxy-D-ribose 1-phosphate degradation; D-glyceraldehyde 3-phosphate and acetaldehyde from 2-deoxy-alpha-D-ribose 1-phosphate: step 1/2. Functionally, isomerase that catalyzes the conversion of deoxy-ribose 1-phosphate (dRib-1-P) and ribose 1-phosphate (Rib-1-P) to deoxy-ribose 5-phosphate (dRib-5-P) and ribose 5-phosphate (Rib-5-P), respectively. This is Phosphopentomutase from Lactococcus lactis subsp. cremoris (strain SK11).